A 301-amino-acid chain; its full sequence is UDP-N-acetylenolpyruvoylglucosamine reductase 1 (301 aa).

In terms of domain architecture, FAD-binding PCMH-type spans 29–196; the sequence is KIGGPADILI…LEAEFQLQIG (168 aa). The active site involves Arg174. Ser225 (proton donor) is an active-site residue. Glu295 is an active-site residue.

This sequence belongs to the MurB family. Requires FAD as cofactor.

Its subcellular location is the cytoplasm. The enzyme catalyses UDP-N-acetyl-alpha-D-muramate + NADP(+) = UDP-N-acetyl-3-O-(1-carboxyvinyl)-alpha-D-glucosamine + NADPH + H(+). It participates in cell wall biogenesis; peptidoglycan biosynthesis. Its function is as follows. Cell wall formation. This is UDP-N-acetylenolpyruvoylglucosamine reductase 1 from Bacillus cereus (strain ZK / E33L).